The chain runs to 483 residues: NADH-quinone oxidoreductase subunit N (483 aa).

13 helical membrane passes run 13–33 (PALP…YGVF), 45–65 (GALA…NAYV), 80–100 (FMKL…LTFI), 111–131 (PVLI…NGLI), 165–185 (FVLG…IYGF), 205–225 (IGVI…ISAV), 244–264 (AFFA…VLFV), 276–296 (IIVF…IGQS), 301–321 (LMAY…AAGT), 328–348 (VLIY…CILA), 373–393 (AFMM…AGFF), 407–429 (LYPL…LRIV), and 452–472 (VLGI…PLIL).

This sequence belongs to the complex I subunit 2 family. NDH-1 is composed of 14 different subunits. Subunits NuoA, H, J, K, L, M, N constitute the membrane sector of the complex.

The protein resides in the cell inner membrane. The enzyme catalyses a quinone + NADH + 5 H(+)(in) = a quinol + NAD(+) + 4 H(+)(out). NDH-1 shuttles electrons from NADH, via FMN and iron-sulfur (Fe-S) centers, to quinones in the respiratory chain. The immediate electron acceptor for the enzyme in this species is believed to be ubiquinone. Couples the redox reaction to proton translocation (for every two electrons transferred, four hydrogen ions are translocated across the cytoplasmic membrane), and thus conserves the redox energy in a proton gradient. This chain is NADH-quinone oxidoreductase subunit N, found in Parvibaculum lavamentivorans (strain DS-1 / DSM 13023 / NCIMB 13966).